Reading from the N-terminus, the 204-residue chain is Holliday junction branch migration complex subunit RuvA (204 aa).

Residues 1 to 64 (MIGKLKGTID…EDQLKLFGFM (64 aa)) form a domain I region. Residues 65–143 (TALEREWFNL…AYAGEAINIA (79 aa)) form a domain II region. The interval 144-151 (LKRELGEG) is flexible linker. The domain III stretch occupies residues 152–204 (VAAAPVADAVSALTNLGYSRDQAANAVAAAMKTAGEGADSAKLIRLGLKELAR).

Belongs to the RuvA family. Homotetramer. Forms an RuvA(8)-RuvB(12)-Holliday junction (HJ) complex. HJ DNA is sandwiched between 2 RuvA tetramers; dsDNA enters through RuvA and exits via RuvB. An RuvB hexamer assembles on each DNA strand where it exits the tetramer. Each RuvB hexamer is contacted by two RuvA subunits (via domain III) on 2 adjacent RuvB subunits; this complex drives branch migration. In the full resolvosome a probable DNA-RuvA(4)-RuvB(12)-RuvC(2) complex forms which resolves the HJ.

The protein resides in the cytoplasm. Functionally, the RuvA-RuvB-RuvC complex processes Holliday junction (HJ) DNA during genetic recombination and DNA repair, while the RuvA-RuvB complex plays an important role in the rescue of blocked DNA replication forks via replication fork reversal (RFR). RuvA specifically binds to HJ cruciform DNA, conferring on it an open structure. The RuvB hexamer acts as an ATP-dependent pump, pulling dsDNA into and through the RuvAB complex. HJ branch migration allows RuvC to scan DNA until it finds its consensus sequence, where it cleaves and resolves the cruciform DNA. The chain is Holliday junction branch migration complex subunit RuvA from Rhizobium etli (strain ATCC 51251 / DSM 11541 / JCM 21823 / NBRC 15573 / CFN 42).